Reading from the N-terminus, the 97-residue chain is NADH-ubiquinone oxidoreductase chain 4L (97 aa).

Transmembrane regions (helical) follow at residues 1–21 (MSMF…YVFC), 28–48 (LVVL…IVLF), and 57–77 (FFPV…LSIL).

This sequence belongs to the complex I subunit 4L family.

The protein localises to the mitochondrion membrane. The catalysed reaction is a ubiquinone + NADH + 5 H(+)(in) = a ubiquinol + NAD(+) + 4 H(+)(out). Functionally, core subunit of the mitochondrial membrane respiratory chain NADH dehydrogenase (Complex I) that is believed to belong to the minimal assembly required for catalysis. Complex I functions in the transfer of electrons from NADH to the respiratory chain. The immediate electron acceptor for the enzyme is believed to be ubiquinone. This is NADH-ubiquinone oxidoreductase chain 4L (ND4L) from Locusta migratoria (Migratory locust).